Reading from the N-terminus, the 238-residue chain is Sarcospan (238 aa).

The disordered stretch occupies residues Met1–Gln33. Residues Met1 to Pro48 are Extracellular-facing. The segment covering Arg8–Asp20 has biased composition (low complexity). The chain crosses the membrane as a helical span at residues Leu49–Met69. Over Ala70–Thr81 the chain is Cytoplasmic. Residues Pro82–Val102 traverse the membrane as a helical segment. The Cytoplasmic segment spans residues Ser103 to Lys117. A helical transmembrane segment spans residues Leu118–Ala138. Residues Ala139–Val188 lie on the Extracellular side of the membrane. Residues Phe189–Phe209 form a helical membrane-spanning segment. Residues Val210 to Val238 lie on the Cytoplasmic side of the membrane.

Its subcellular location is the cell membrane. The protein resides in the sarcolemma. The protein localises to the postsynaptic cell membrane. Component of the dystrophin-glycoprotein complex (DGC), a complex that spans the muscle plasma membrane and forms a link between the F-actin cytoskeleton and the extracellular matrix. Preferentially associates with the sarcoglycan subcomplex of the DGC. The sequence is that of Sarcospan (SSPN) from Oryctolagus cuniculus (Rabbit).